Reading from the N-terminus, the 498-residue chain is Lysine--tRNA ligase (498 aa).

Residues Glu407 and Glu414 each coordinate Mg(2+).

The protein belongs to the class-II aminoacyl-tRNA synthetase family. Homodimer. Mg(2+) serves as cofactor.

The protein localises to the cytoplasm. The enzyme catalyses tRNA(Lys) + L-lysine + ATP = L-lysyl-tRNA(Lys) + AMP + diphosphate. This chain is Lysine--tRNA ligase, found in Rhizobium johnstonii (strain DSM 114642 / LMG 32736 / 3841) (Rhizobium leguminosarum bv. viciae).